The chain runs to 705 residues: Elongation factor G (705 aa).

Positions 7 to 287 (HLTRNIGIMA…YVCAFLPSPL (281 aa)) constitute a tr-type G domain. Residues 16–23 (AHIDAGKT), 84–88 (DTPGH), and 138–141 (NKMD) contribute to the GTP site. Residues 291–312 (NVVGTNPDTGAEEDRKPSEDDK) form a disordered region. Basic and acidic residues predominate over residues 302-312 (EEDRKPSEDDK).

This sequence belongs to the TRAFAC class translation factor GTPase superfamily. Classic translation factor GTPase family. EF-G/EF-2 subfamily.

It localises to the cytoplasm. Functionally, catalyzes the GTP-dependent ribosomal translocation step during translation elongation. During this step, the ribosome changes from the pre-translocational (PRE) to the post-translocational (POST) state as the newly formed A-site-bound peptidyl-tRNA and P-site-bound deacylated tRNA move to the P and E sites, respectively. Catalyzes the coordinated movement of the two tRNA molecules, the mRNA and conformational changes in the ribosome. This Bacteroides fragilis (strain ATCC 25285 / DSM 2151 / CCUG 4856 / JCM 11019 / LMG 10263 / NCTC 9343 / Onslow / VPI 2553 / EN-2) protein is Elongation factor G.